We begin with the raw amino-acid sequence, 666 residues long: Kinesin-like protein Nod (666 aa).

Residues alanine 8–leucine 320 form the Kinesin motor domain. Glycine 87–serine 94 is a binding site for ATP. A disordered region spans residues glycine 423–asparagine 450. The stretch at glutamate 639–threonine 666 forms a coiled coil.

The protein belongs to the TRAFAC class myosin-kinesin ATPase superfamily. Kinesin family. In adult female, found in meiotically active ovaries.

It localises to the cytoplasm. The protein resides in the cytoskeleton. Functionally, required for the distributive chromosome segregation of non-exchange chromosomes during meiosis. May be a microtubule motor required to hold distributively 'paired' chromosomes at the metaphase plate until anaphase. The sequence is that of Kinesin-like protein Nod (nod) from Drosophila melanogaster (Fruit fly).